A 213-amino-acid chain; its full sequence is Ribosomal RNA small subunit methyltransferase G (213 aa).

S-adenosyl-L-methionine contacts are provided by residues Gly72, Phe77, 125 to 126 (IE), and Arg141.

Belongs to the methyltransferase superfamily. RNA methyltransferase RsmG family.

It localises to the cytoplasm. The enzyme catalyses guanosine(527) in 16S rRNA + S-adenosyl-L-methionine = N(7)-methylguanosine(527) in 16S rRNA + S-adenosyl-L-homocysteine. Functionally, specifically methylates the N7 position of guanine in position 527 of 16S rRNA. In Sinorhizobium medicae (strain WSM419) (Ensifer medicae), this protein is Ribosomal RNA small subunit methyltransferase G.